The sequence spans 190 residues: Cell division protein SepF (190 aa).

It belongs to the SepF family. Homodimer. Interacts with FtsZ.

It is found in the cytoplasm. Cell division protein that is part of the divisome complex and is recruited early to the Z-ring. Probably stimulates Z-ring formation, perhaps through the cross-linking of FtsZ protofilaments. Its function overlaps with FtsA. This Synechococcus sp. (strain WH7803) protein is Cell division protein SepF.